Consider the following 35-residue polypeptide: GCIAKNKECAWFSGEWCCGALSCKYSIKRNLKICV.

3 disulfide bridges follow: C2-C18, C9-C23, and C17-C34.

Belongs to the neurotoxin 07 (Beta/delta-agtx) family. In terms of tissue distribution, expressed by the venom gland.

It localises to the secreted. Its function is as follows. Gating-modifier toxin that inhibits mammalian and insect voltage-gated sodium channels. It shifts the voltage dependence of channel activation to more positive voltages. It shows potent activity on Nav1.4/SCN4A (IC(50)=103 nM), Nav1.5/SCN5A (IC(50)=268 nM) and Para/DmNav1 (IC(50)=555 nM) and lower activities on Nav1.2/SCN2A (IC(50)=1447 nM) and Nav1.6/SCN8A (IC(50)=3504 nM). In addition, at a concentration of 1 uM, the toxin inhibits 90-100% of sodium current through Nav1.2/SCN2A, Nav1.4/SCN4A, Nav1.5/SCN5A, Nav1.6/SCN8A and Para/DmNav1 channels, when the voltage of maximal activation of the channel in control conditions is applied. It binds to the S3-S4 helix-loop-helix motif in the voltage-sensing domain of repeat 1 (shown on hNav1.4/SCN4A). The toxin is amphiphilic and binds to both neutral and negatively charged lipid vesicles with high affinity. The hydrophobic face lies on the opposite side to the hydrophobic faces of classical gating modifiers. This chain is Mu-thomitoxin-Hme1c, found in Heriaeus mellotteei (Crab spider).